Here is a 92-residue protein sequence, read N- to C-terminus: Small ribosomal subunit protein uS19 (92 aa).

Residues 1–27 (MARSIKKGPFADDHLKKKVEAQSGSEK) form a disordered region. Positions 9-27 (PFADDHLKKKVEAQSGSEK) are enriched in basic and acidic residues.

This sequence belongs to the universal ribosomal protein uS19 family.

Its function is as follows. Protein S19 forms a complex with S13 that binds strongly to the 16S ribosomal RNA. This is Small ribosomal subunit protein uS19 from Staphylococcus saprophyticus subsp. saprophyticus (strain ATCC 15305 / DSM 20229 / NCIMB 8711 / NCTC 7292 / S-41).